Here is a 414-residue protein sequence, read N- to C-terminus: Phospholipase A1-IIbeta (414 aa).

A Glycyl lysine isopeptide (Lys-Gly) (interchain with G-Cter in ubiquitin) cross-link involves residue Lys19. The stretch at 191-217 (DKTSAQEQVQEELKRLLELYKNEDVTI) forms a coiled coil. Ser223 (acyl-ester intermediate) is an active-site residue. Residues Ser223, Asp289, and His326 each act as charge relay system in the active site. Residues 386 to 414 (DGTWKLNGDRSKKKQEEEDEKEENNCKFP) form a disordered region. The stretch at 390–410 (KLNGDRSKKKQEEEDEKEENN) forms a coiled coil. A compositionally biased stretch (basic and acidic residues) spans 392–401 (NGDRSKKKQE).

The protein belongs to the AB hydrolase superfamily. Lipase family.

The protein resides in the cytoplasm. Its function is as follows. Acylhydrolase that catalyzes the hydrolysis of phospholipids at the sn-1 position. The chain is Phospholipase A1-IIbeta from Arabidopsis thaliana (Mouse-ear cress).